Here is a 797-residue protein sequence, read N- to C-terminus: Phenylalanine--tRNA ligase beta subunit (797 aa).

Residues 40–154 (MEGLSKLVVG…ADAKVGDSIF (115 aa)) enclose the tRNA-binding domain. Residues 407 to 482 (PILPKVSITL…RIYGYDNLPS (76 aa)) form the B5 domain. Mg(2+) contacts are provided by D460, D466, E469, and E470. One can recognise an FDX-ACB domain in the interval 704–797 (PKVQAVHRDI…LVEKLDIEIR (94 aa)).

It belongs to the phenylalanyl-tRNA synthetase beta subunit family. Type 1 subfamily. As to quaternary structure, tetramer of two alpha and two beta subunits. The cofactor is Mg(2+).

Its subcellular location is the cytoplasm. It carries out the reaction tRNA(Phe) + L-phenylalanine + ATP = L-phenylalanyl-tRNA(Phe) + AMP + diphosphate + H(+). This chain is Phenylalanine--tRNA ligase beta subunit, found in Lactococcus lactis subsp. lactis (strain IL1403) (Streptococcus lactis).